The sequence spans 467 residues: UDP-N-acetylmuramate--L-alanine ligase (467 aa).

114–120 (GTHGKTT) is an ATP binding site.

This sequence belongs to the MurCDEF family.

The protein localises to the cytoplasm. It carries out the reaction UDP-N-acetyl-alpha-D-muramate + L-alanine + ATP = UDP-N-acetyl-alpha-D-muramoyl-L-alanine + ADP + phosphate + H(+). It functions in the pathway cell wall biogenesis; peptidoglycan biosynthesis. Its function is as follows. Cell wall formation. This chain is UDP-N-acetylmuramate--L-alanine ligase, found in Rhodopseudomonas palustris (strain BisA53).